We begin with the raw amino-acid sequence, 197 residues long: ATP synthase subunit delta (197 aa).

Belongs to the ATPase delta chain family. As to quaternary structure, F-type ATPases have 2 components, F(1) - the catalytic core - and F(0) - the membrane proton channel. F(1) has five subunits: alpha(3), beta(3), gamma(1), delta(1), epsilon(1). F(0) has three main subunits: a(1), b(2) and c(10-14). The alpha and beta chains form an alternating ring which encloses part of the gamma chain. F(1) is attached to F(0) by a central stalk formed by the gamma and epsilon chains, while a peripheral stalk is formed by the delta and b chains.

It localises to the cell inner membrane. F(1)F(0) ATP synthase produces ATP from ADP in the presence of a proton or sodium gradient. F-type ATPases consist of two structural domains, F(1) containing the extramembraneous catalytic core and F(0) containing the membrane proton channel, linked together by a central stalk and a peripheral stalk. During catalysis, ATP synthesis in the catalytic domain of F(1) is coupled via a rotary mechanism of the central stalk subunits to proton translocation. In terms of biological role, this protein is part of the stalk that links CF(0) to CF(1). It either transmits conformational changes from CF(0) to CF(1) or is implicated in proton conduction. In Bartonella henselae (strain ATCC 49882 / DSM 28221 / CCUG 30454 / Houston 1) (Rochalimaea henselae), this protein is ATP synthase subunit delta.